Here is a 90-residue protein sequence, read N- to C-terminus: Small ribosomal subunit protein uS15c (90 aa).

In terms of assembly, component of the chloroplast small ribosomal subunit (SSU). Mature 70S chloroplast ribosomes of higher plants consist of a small (30S) and a large (50S) subunit. The 30S small subunit contains 1 molecule of ribosomal RNA (16S rRNA) and 24 different proteins. The 50S large subunit contains 3 rRNA molecules (23S, 5S and 4.5S rRNA) and 33 different proteins.

Its subcellular location is the plastid. The protein resides in the chloroplast. Component of the chloroplast ribosome (chloro-ribosome), a dedicated translation machinery responsible for the synthesis of chloroplast genome-encoded proteins, including proteins of the transcription and translation machinery and components of the photosynthetic apparatus. The sequence is that of Small ribosomal subunit protein uS15c (rps15) from Spinacia oleracea (Spinach).